The chain runs to 497 residues: Vacuolar-processing enzyme beta-isozyme 1 (497 aa).

The N-terminal stretch at 1-23 (MAARCWVWGFVVALLAVAAAADG) is a signal peptide. The N-linked (GlcNAc...) asparagine glycan is linked to Asn153. The active site involves His180. The active-site Nucleophile is Cys222. An intrachain disulfide couples Cys255 to Cys269. Residue Asn340 is glycosylated (N-linked (GlcNAc...) asparagine). Disulfide bonds link Cys432–Cys462 and Cys444–Cys479.

It belongs to the peptidase C13 family. Auto-catalytic activation.

It is found in the protein storage vacuole. It catalyses the reaction Hydrolysis of proteins and small molecule substrates at -Asn-|-Xaa- bonds.. Its function is as follows. Asparagine-specific endopeptidase that may be involved in processing of proteins targeted to vacuoles. Cysteine protease required for post-translational proteolysis of seed storage proteins in the protein storage vacuole (PSV) of developing seeds, by processing of proglutelin precursor to mature glutelin subunits, thus contributing to the formation of protein crystalline structures in PSV. The protein is Vacuolar-processing enzyme beta-isozyme 1 of Oryza sativa subsp. indica (Rice).